The primary structure comprises 224 residues: Large ribosomal subunit protein bL25 (224 aa).

This sequence belongs to the bacterial ribosomal protein bL25 family. CTC subfamily. Part of the 50S ribosomal subunit; part of the 5S rRNA/L5/L18/L25 subcomplex. Contacts the 5S rRNA. Binds to the 5S rRNA independently of L5 and L18.

Its function is as follows. This is one of the proteins that binds to the 5S RNA in the ribosome where it forms part of the central protuberance. This is Large ribosomal subunit protein bL25 from Psychrobacter arcticus (strain DSM 17307 / VKM B-2377 / 273-4).